The sequence spans 401 residues: Argininosuccinate synthase (401 aa).

10 to 18 serves as a coordination point for ATP; that stretch reads AYSGGVDTS. Y89 lines the L-citrulline pocket. G119 lines the ATP pocket. The L-aspartate site is built by T121, N125, and D126. Residue N125 participates in L-citrulline binding. Residues R129, S177, S186, E262, and Y274 each contribute to the L-citrulline site.

This sequence belongs to the argininosuccinate synthase family. Type 1 subfamily. Homotetramer.

It localises to the cytoplasm. It catalyses the reaction L-citrulline + L-aspartate + ATP = 2-(N(omega)-L-arginino)succinate + AMP + diphosphate + H(+). Its pathway is amino-acid biosynthesis; L-arginine biosynthesis; L-arginine from L-ornithine and carbamoyl phosphate: step 2/3. The protein is Argininosuccinate synthase of Thermosynechococcus vestitus (strain NIES-2133 / IAM M-273 / BP-1).